The following is a 138-amino-acid chain: Small ribosomal subunit protein uS11c (138 aa).

The disordered stretch occupies residues 1–22; that stretch reads MAKSIPRISSRRNGPIGSGKTV.

It belongs to the universal ribosomal protein uS11 family. Part of the 30S ribosomal subunit.

The protein localises to the plastid. The sequence is that of Small ribosomal subunit protein uS11c from Cuscuta exaltata (Tall dodder).